Reading from the N-terminus, the 250-residue chain is 3-deoxy-manno-octulosonate cytidylyltransferase (250 aa).

This sequence belongs to the KdsB family.

Its subcellular location is the cytoplasm. The catalysed reaction is 3-deoxy-alpha-D-manno-oct-2-ulosonate + CTP = CMP-3-deoxy-beta-D-manno-octulosonate + diphosphate. It participates in nucleotide-sugar biosynthesis; CMP-3-deoxy-D-manno-octulosonate biosynthesis; CMP-3-deoxy-D-manno-octulosonate from 3-deoxy-D-manno-octulosonate and CTP: step 1/1. It functions in the pathway bacterial outer membrane biogenesis; lipopolysaccharide biosynthesis. Functionally, activates KDO (a required 8-carbon sugar) for incorporation into bacterial lipopolysaccharide in Gram-negative bacteria. This chain is 3-deoxy-manno-octulosonate cytidylyltransferase, found in Pectobacterium carotovorum subsp. carotovorum (strain PC1).